Here is a 74-residue protein sequence, read N- to C-terminus: RNA-binding protein Hfq (74 aa).

A Sm domain is found at 9–69; that stretch reads DQFLNQLRKD…ISTFAPEKNV (61 aa).

The protein belongs to the Hfq family. As to quaternary structure, homohexamer.

Functionally, RNA chaperone that binds small regulatory RNA (sRNAs) and mRNAs to facilitate mRNA translational regulation in response to envelope stress, environmental stress and changes in metabolite concentrations. Also binds with high specificity to tRNAs. In Geobacillus sp. (strain WCH70), this protein is RNA-binding protein Hfq.